Reading from the N-terminus, the 272-residue chain is Small ribosomal subunit protein uS3 (272 aa).

Residues 43–111 (IRELMTTGME…QIQLNILEVK (69 aa)) form the KH type-2 domain. The interval 218 to 272 (AKEAAQPSGRGRGGERRGGGERRRRNDRAERAPRQENAGAGAETPAAAPAEGGNA) is disordered. The span at 229–238 (RGGERRGGGE) shows a compositional bias: basic and acidic residues. Residues 253 to 272 (ENAGAGAETPAAAPAEGGNA) are compositionally biased toward low complexity.

It belongs to the universal ribosomal protein uS3 family. As to quaternary structure, part of the 30S ribosomal subunit. Forms a tight complex with proteins S10 and S14.

In terms of biological role, binds the lower part of the 30S subunit head. Binds mRNA in the 70S ribosome, positioning it for translation. The polypeptide is Small ribosomal subunit protein uS3 (Micrococcus luteus (strain ATCC 4698 / DSM 20030 / JCM 1464 / CCM 169 / CCUG 5858 / IAM 1056 / NBRC 3333 / NCIMB 9278 / NCTC 2665 / VKM Ac-2230) (Micrococcus lysodeikticus)).